The following is a 345-amino-acid chain: Homeobox-leucine zipper protein HOX16 (345 aa).

Residues 76–135 (LPEKKRRLTPEQVHLLERSFEEENKLEPERKTELARKLGLQPRQVAVWFQNRRARWKTKQ) constitute a DNA-binding region (homeobox). A leucine-zipper region spans residues 134–178 (KQLERDFDRLKASFDALRADHDALLQDNHRLHSQVMSLTEKLQEK). A disordered region spans residues 220-241 (FEEQQEQQVKAEDRLSTGSGGS).

It belongs to the HD-ZIP homeobox family. Class I subfamily. Expressed in seedlings, stems, leaf sheaths and blades and panicles.

The protein resides in the nucleus. In terms of biological role, probable transcription factor. This is Homeobox-leucine zipper protein HOX16 (HOX16) from Oryza sativa subsp. indica (Rice).